We begin with the raw amino-acid sequence, 358 residues long: Aromatic amino acid aminotransferase (358 aa).

N6-(pyridoxal phosphate)lysine is present on K214.

It belongs to the class-II pyridoxal-phosphate-dependent aminotransferase family. Homodimer. Requires pyridoxal 5'-phosphate as cofactor.

The catalysed reaction is an aromatic L-alpha-amino acid + 2-oxoglutarate = an aromatic oxo-acid + L-glutamate. Its function is as follows. Aminotransferase that catalyzes the conversion of aromatic amino acids and 2-oxoglutarate into corresponding aromatic oxo acids and L-glutamate. This is Aromatic amino acid aminotransferase from Rhodococcus jostii (strain RHA1).